The following is a 289-amino-acid chain: Splicing factor C9orf78 homolog (289 aa).

Disordered stretches follow at residues 1–30 (MRIT…VRLK) and 85–111 (RGKD…RRDE). An interaction with SNRNP200 region spans residues 5-58 (GKTFRRRRADSESEEDEQESEEVRLKLEETREVQNLRKRPNGVSAAALLVGEKV). A phosphoserine mark is found at serine 15 and serine 17. Tyrosine 147 carries the phosphotyrosine modification. The segment covering 232 to 283 (LNAPIRRNKEEPKARPLRVGDTEKPEPERSPPNRKRPANEKATDDYHYEKFK) has biased composition (basic and acidic residues). The disordered stretch occupies residues 232–289 (LNAPIRRNKEEPKARPLRVGDTEKPEPERSPPNRKRPANEKATDDYHYEKFKKMNRRY). A Phosphothreonine modification is found at threonine 253. Serine 261 carries the phosphoserine modification.

The protein belongs to the TLS1 family. Component of the spliceosome. Interacts with SNRNP200; the interaction is direct. Interacts with PRPF8.

The protein resides in the nucleus. It is found in the chromosome. Its subcellular location is the centromere. In terms of biological role, plays a role in pre-mRNA splicing by promoting usage of the upstream 3'-splice site at alternative NAGNAG splice sites; these are sites featuring alternative acceptor motifs separated by only a few nucleotides. May also modulate exon inclusion events. PPlays a role in spliceosomal remodeling by displacing WBP4 from SNRNP200 and may act to inhibit SNRNP200 helicase activity. Binds U5 snRNA. Required for proper chromosome segregation. Not required for splicing of shelterin components. The chain is Splicing factor C9orf78 homolog from Mus musculus (Mouse).